The primary structure comprises 724 residues: DNA ligase (724 aa).

NAD(+)-binding positions include 44 to 48, 93 to 94, and Glu-127; these read DADYD and SL. Catalysis depends on Lys-129, which acts as the N6-AMP-lysine intermediate. NAD(+)-binding residues include Arg-150, Glu-186, Lys-307, and Lys-331. Residues Cys-437, Cys-440, Cys-461, and Cys-467 each coordinate Zn(2+). In terms of domain architecture, BRCT spans 646 to 724; the sequence is TEGSPVAGKT…EDEWLALIGG (79 aa).

Belongs to the NAD-dependent DNA ligase family. LigA subfamily. Mg(2+) is required as a cofactor. It depends on Mn(2+) as a cofactor.

It carries out the reaction NAD(+) + (deoxyribonucleotide)n-3'-hydroxyl + 5'-phospho-(deoxyribonucleotide)m = (deoxyribonucleotide)n+m + AMP + beta-nicotinamide D-nucleotide.. DNA ligase that catalyzes the formation of phosphodiester linkages between 5'-phosphoryl and 3'-hydroxyl groups in double-stranded DNA using NAD as a coenzyme and as the energy source for the reaction. It is essential for DNA replication and repair of damaged DNA. The polypeptide is DNA ligase (Agrobacterium fabrum (strain C58 / ATCC 33970) (Agrobacterium tumefaciens (strain C58))).